The following is a 156-amino-acid chain: Large ribosomal subunit protein uL15 (156 aa).

Positions M1–T13 are enriched in basic and acidic residues. A disordered region spans residues M1–R41. Residues R21 to V35 are compositionally biased toward gly residues.

The protein belongs to the universal ribosomal protein uL15 family. As to quaternary structure, part of the 50S ribosomal subunit.

In terms of biological role, binds to the 23S rRNA. The chain is Large ribosomal subunit protein uL15 from Sinorhizobium medicae (strain WSM419) (Ensifer medicae).